The following is a 313-amino-acid chain: Ribosomal RNA small subunit methyltransferase H (313 aa).

S-adenosyl-L-methionine contacts are provided by residues 35-37, D55, F79, D101, and Q108; that span reads GGH.

The protein belongs to the methyltransferase superfamily. RsmH family.

It is found in the cytoplasm. It carries out the reaction cytidine(1402) in 16S rRNA + S-adenosyl-L-methionine = N(4)-methylcytidine(1402) in 16S rRNA + S-adenosyl-L-homocysteine + H(+). Specifically methylates the N4 position of cytidine in position 1402 (C1402) of 16S rRNA. The polypeptide is Ribosomal RNA small subunit methyltransferase H (Escherichia coli O7:K1 (strain IAI39 / ExPEC)).